The following is a 479-amino-acid chain: Ribosomal RNA small subunit methyltransferase F (479 aa).

S-adenosyl-L-methionine contacts are provided by residues 125-131 (AAAPGSK), glutamate 149, aspartate 176, and aspartate 194. The Nucleophile role is filled by cysteine 247.

Belongs to the class I-like SAM-binding methyltransferase superfamily. RsmB/NOP family.

Its subcellular location is the cytoplasm. The catalysed reaction is cytidine(1407) in 16S rRNA + S-adenosyl-L-methionine = 5-methylcytidine(1407) in 16S rRNA + S-adenosyl-L-homocysteine + H(+). In terms of biological role, specifically methylates the cytosine at position 1407 (m5C1407) of 16S rRNA. This chain is Ribosomal RNA small subunit methyltransferase F, found in Escherichia coli O6:H1 (strain CFT073 / ATCC 700928 / UPEC).